The sequence spans 253 residues: Probable transcriptional regulatory protein Tlet_1011 (253 aa).

It belongs to the TACO1 family.

It is found in the cytoplasm. This is Probable transcriptional regulatory protein Tlet_1011 from Pseudothermotoga lettingae (strain ATCC BAA-301 / DSM 14385 / NBRC 107922 / TMO) (Thermotoga lettingae).